The chain runs to 137 residues: Small ribosomal subunit protein bS16 (137 aa).

Basic and acidic residues predominate over residues 104-118 (ADEKKKPVLKPKTEK). The interval 104-137 (ADEKKKPVLKPKTEKAAPAPEAAAPEAESTEEQA) is disordered. Residues 119–130 (AAPAPEAAAPEA) show a composition bias toward low complexity.

This sequence belongs to the bacterial ribosomal protein bS16 family.

This Clavibacter michiganensis subsp. michiganensis (strain NCPPB 382) protein is Small ribosomal subunit protein bS16.